A 778-amino-acid chain; its full sequence is Centromere/kinetochore protein zw10 homolog (778 aa).

Positions 47-99 (FDRLENLEDIAEMSTRNLSNLIDQTAKDSPEMLAEIKSQAQSCENLVEFLQSM) form a coiled coil.

This sequence belongs to the ZW10 family. In terms of assembly, component of the RZZ complex composed of rod-1, czw-1 and zwl-1.

It localises to the chromosome. It is found in the centromere. The protein resides in the kinetochore. The protein localises to the cytoplasm. Its subcellular location is the cytoskeleton. It localises to the spindle. In terms of biological role, essential component of the mitotic checkpoint, which prevents cells from prematurely exiting mitosis. Required for the assembly of the dynein-dynactin and mdf-1-mdf-2 complexes onto kinetochores. Its function related to the spindle assembly machinery and kinetochore-microtubule attachments likely depends on its association in the mitotic RZZ complex. The RZZ complex recruits the spindly-like protein spdl-1 to kinetochores. To prevent irregular chromosome segregation, the complex also inhibits the attachment of the kinetochore-associated NDC80 complex to microtubules. The recruitment of spdl-1 to kinetochores relieves this inhibition. Required for embryonic development. This chain is Centromere/kinetochore protein zw10 homolog, found in Caenorhabditis elegans.